Reading from the N-terminus, the 115-residue chain is Somatostatin-1 (115 aa).

The signal sequence occupies residues 1 to 24 (MQSCRVQCALTLLSLALAINSISA). A propeptide spanning residues 25–99 (APTDPRLRQF…NSSPALAPRE (75 aa)) is cleaved from the precursor. The interval 60-79 (SQTDNEALESDDLPRGAEQD) is disordered. A disulfide bridge connects residues C104 and C115.

It belongs to the somatostatin family.

It localises to the secreted. In terms of biological role, somatostatin inhibits the release of somatotropin. The polypeptide is Somatostatin-1 (sst1) (Pelophylax ridibundus (Marsh frog)).